A 140-amino-acid chain; its full sequence is ATP synthase epsilon chain (140 aa).

It belongs to the ATPase epsilon chain family. In terms of assembly, F-type ATPases have 2 components, CF(1) - the catalytic core - and CF(0) - the membrane proton channel. CF(1) has five subunits: alpha(3), beta(3), gamma(1), delta(1), epsilon(1). CF(0) has three main subunits: a, b and c.

The protein resides in the cell inner membrane. Produces ATP from ADP in the presence of a proton gradient across the membrane. In Nitrosomonas europaea (strain ATCC 19718 / CIP 103999 / KCTC 2705 / NBRC 14298), this protein is ATP synthase epsilon chain.